Consider the following 159-residue polypeptide: Small ribosomal subunit protein uS7 (159 aa).

It belongs to the universal ribosomal protein uS7 family. Part of the 30S ribosomal subunit. Contacts proteins S9 and S11.

In terms of biological role, one of the primary rRNA binding proteins, it binds directly to 16S rRNA where it nucleates assembly of the head domain of the 30S subunit. Is located at the subunit interface close to the decoding center, probably blocks exit of the E-site tRNA. The polypeptide is Small ribosomal subunit protein uS7 (Wolbachia pipientis wMel).